A 518-amino-acid polypeptide reads, in one-letter code: ATP synthase subunit alpha (518 aa).

Position 169 to 176 (169 to 176 (GDRQTGKT)) interacts with ATP.

Belongs to the ATPase alpha/beta chains family. As to quaternary structure, F-type ATPases have 2 components, CF(1) - the catalytic core - and CF(0) - the membrane proton channel. CF(1) has five subunits: alpha(3), beta(3), gamma(1), delta(1), epsilon(1). CF(0) has three main subunits: a(1), b(2) and c(9-12). The alpha and beta chains form an alternating ring which encloses part of the gamma chain. CF(1) is attached to CF(0) by a central stalk formed by the gamma and epsilon chains, while a peripheral stalk is formed by the delta and b chains.

The protein resides in the cell membrane. The catalysed reaction is ATP + H2O + 4 H(+)(in) = ADP + phosphate + 5 H(+)(out). Functionally, produces ATP from ADP in the presence of a proton gradient across the membrane. The alpha chain is a regulatory subunit. The polypeptide is ATP synthase subunit alpha (Mycoplasma genitalium (strain ATCC 33530 / DSM 19775 / NCTC 10195 / G37) (Mycoplasmoides genitalium)).